Here is a 192-residue protein sequence, read N- to C-terminus: dTDP-3-amino-3,6-dideoxy-alpha-D-galactopyranose 3-N-acetyltransferase (192 aa).

This sequence belongs to the transferase hexapeptide repeat family.

It carries out the reaction dTDP-3-amino-3,6-dideoxy-alpha-D-galactopyranose + acetyl-CoA = dTDP-3-acetamido-3,6-dideoxy-alpha-D-galactopyranose + CoA + H(+). Catalyzes the transfer of an acetyl group to dTDP-D-Fucp3N to form dTDP-D-Fucp3NAc in the biosynthesis of dTDP-3-acetamido-3,6-dideoxy-alpha-D-galactose, a glycan chain of the S-layer. The protein is dTDP-3-amino-3,6-dideoxy-alpha-D-galactopyranose 3-N-acetyltransferase (fdtC) of Aneurinibacillus thermoaerophilus.